Here is a 355-residue protein sequence, read N- to C-terminus: Protein-glutamate methylesterase/protein-glutamine glutaminase (355 aa).

A Response regulatory domain is found at Asn3–Lys121. The residue at position 54 (Asp54) is a 4-aspartylphosphate. The region spanning Pro154 to Arg348 is the CheB-type methylesterase domain. Active-site residues include Ser170, His197, and Asp290.

The protein belongs to the CheB family. Post-translationally, phosphorylated by CheA. Phosphorylation of the N-terminal regulatory domain activates the methylesterase activity.

The protein localises to the cytoplasm. It catalyses the reaction [protein]-L-glutamate 5-O-methyl ester + H2O = L-glutamyl-[protein] + methanol + H(+). The enzyme catalyses L-glutaminyl-[protein] + H2O = L-glutamyl-[protein] + NH4(+). In terms of biological role, involved in chemotaxis. Part of a chemotaxis signal transduction system that modulates chemotaxis in response to various stimuli. Catalyzes the demethylation of specific methylglutamate residues introduced into the chemoreceptors (methyl-accepting chemotaxis proteins or MCP) by CheR. Also mediates the irreversible deamidation of specific glutamine residues to glutamic acid. The polypeptide is Protein-glutamate methylesterase/protein-glutamine glutaminase (Nitrosospira multiformis (strain ATCC 25196 / NCIMB 11849 / C 71)).